The primary structure comprises 3079 residues: MSQPTKNKKKEHGTDSKSSRMTRTLVNHILFERILPILPVESNLSTYSEVEEYSSFISCRSVLINVTVSRDANAMVEGTLELIESLLQGHEIISDKGSSDVIESILIILRLLSDALEYNWQNQESLHYNDISTHVEHDQEQKYRPKLNSILPDYSSTHSNGNKHFFHQSKPQALIPELASKLLESCAKLKFNTRTLQILQNMISHVHGNILTTLSSSILPRHKSYLTRHNHPSHCKMIDSTLGHILRFVAASNPSEYFEFIRKSVQVPVTQTHTHSHSHSHSLPSSVYNSIVPHFDLFSFIYLSKHNFKKYLELIKNLSVTLRKTIYHCLLLHYSAKAIMFWIMARPAEYYELFNLLKDNNNEHSKSLNTLNHTLFEEIHSTFNVNSMITTNQNAHQGSSSPSSSSPSSPPSSSSSDNNNQNIIAKSLSRQLSHHQSYIQQQSERKLHSSWTTNSQSSTSLSSSTSNSTTTDFSTHTQPGEYDPSLPDTPTMSNITISASSLLSQTPTPTTQLQQRLNSAAAAAAAAASPSNSTPTGYTAEQQSRASYDAHKTGHTGKDYDEHFLSVTRLDNVLELYTHFDDTEVLPHTSVLKFLTTLTMFDIDLFNELNATSFKYIPDCTMHRPKERTSSFNNTAHETGSEKTSGIKHITQGLKKLTSLPSSTKKTVKFVKMLLRNLNGNQAVSDVALLDTMRALLSFFTMTSAVFLVDRNLPSVLFAKRLIPIMGTNLSVGQDWNSKINNSLMVCLKKNSTTFVQLQLIFFSSAIQFDHELLLARLSIDTMANNLNMQKLCLYTEGFRIFFDIPSKKELRKAIAVKISKFFKTLFSIIADILLQEFPYFDEQITDIVASILDGTIINEYGTKKHFKGSSPSLCSTTRSRSGSTSQSSMTPVSPLGLDTDICPMNTLSLVGSSTSRNSDNVNSLNSSPKNLSSDPYLSHLVAPRARHALGGPSSIIRNKIPTTLTSPPGTEKSSPVQRPQTESISATPMAITNSTPLSSAAFGIRSPLQKIRTRRYSDESLGKFMKSTNNYIQEHLIPKDLNEATLQDARRIMINIFSIFKRPNSYFIIPHNINSNLQWVSQDFRNIMKPIFVAIVSPDVDLQNTAQSFMDTLLSNVITYGESDENISIEGYHLLCSYTVTLFAMGLFDLKINNEKRQILLDITVKFMKVRSHLAGIAEASHHMEYISDSEKLTFPLIMGTVGRALFVSLYSSQQKIEKTLKIAYTEYLSAINFHERNIDDADKTWVHNIEFVEAMCHDNYTTSGSIAFQRRTRNNILRFATIPNAILLDSMRMIYKKWHTYTHSKSLEKQERNDFRNFAGILASLSGILFINKKILQEMYPYLLDTVSELKKNIDSFISKQCQWLNYPDLLTRENSRDILSVELHPLSFNLLFNNLRLKLKELACSDLSIPENESSYVLLEQIIKMLRTILGRDDDNYVMMLFSTEIVDLIDLLTDEIKKIPAYCPKYLKAIIQMTKMFSALQHSEVNLGVKNHFHVKNKWLRQITDWFQVSIAREYDFENLSKPLKEMDLVKRDMDILYIDTAIEASTAIAYLTRHTFLEIPPAASDPELSRSRSVIFGFYFNILMKGLEKSSDRDNYPVFLRHKMSVLNDNVILSLTNLSNTNVDASLQFTLPMGYSGNRNIRNAFLEVFINIVTNYRTYTAKTDLGKLEAADKFLRYTIEHPQLSSFGAAVCPASDIDAYAAGLINAFETRNATHIVVAQLIKNEIEKSSRPTDILRRNSCATRSLSMLARSKGNEYLIRTLQPLLKKIIQNRDFFEIEKLKPEDSDAERQIELFVKYMNELLESISNSVSYFPPPLFYICQNIYKVACEKFPDHAIIAAGSFVFLRFFCPALVSPDSENIIDISHLSEKRTFISLAKVIQNIANGSENFSRWPALCSQKDFLKECSDRIFRFLAELCRTDRTIDIQVRTDPTPIAFDYQFLHSFVYLYGLEVRRNVLNEAKHDDGDIDGDDFYKTTFLLIDDVLGQLGQPKMEFSNEIPIYIREHMDDYPELYEFMNRHAFRNIETSTAYSPSVHESTSSEGIPIITLTMSNFSDRHVDIDTVAYKFLQIYARIWTTKHCLIIDCTEFDEGGLDMRKFISLVMGLLPEVAPKNCIGCYYFNVNETFMDNYGKCLDKDNVYVSSKIPHYFINSNSDEGLMKSVGITGQGLKVLQDIRVSLHDITLYDEKRNRFTPVSLKIGDIYFQVLHETPRQYKIRDMGTLFDVKFNDVYEISRIFEVHVSSITGVAAEFTVTFQDERRLIFSSPKYLEIVKMFYYAQIRLESEYEMDNNSSTSSPNSNNKDKQQKERTKLLCHLLLVSLIGLFDESKKMKNSSYNLIAATEASFGLNFGSHFHRSPEVYVPEDTTTFLGVIGKSLAESNPELTAYMFIYVLEALKNNVIPHVYIPHTICGLSYWIPNLYQHVYLADDEEGPENISHIFRILIRLSVRETDFKAVYMQYVWLLLLDDGRLTDIIVDEVINHALERDSENRDWKKTISLLTVLPTTEVANNIIQKILAKIRSFLPSLKLEAMTQSWSELTILVKISIHVFFETSLLVQMYLPEILFIVSLLIDVGPRELRSSLHQLLMNVCHSLAINSALPQDHRNNLDEISDIFAHQKVKFMFGFSEDKGRILQIFSASSFASKFNILDFFINNILLLMEYSSTYEANVWKTRYKKYVLESVFTSNSFLSARSIMIVGIMGKSYITEGLCKAMLIETMKVIAEPKITDEHLFLAISHIFTYSKIVEGLDPNLDLMKHLFWFSTLFLESRHPIIFEGALLFVSNCIRRLYMAQFENESETSLISTLLKGRKFAHTFLSKIENLSGIVWNEDNFTHILIFIINKGLSNPFIKSTAFDFLKMMFRNSYFEHQINQKSDHYLCYMFLLYFVLNCNQFEELLGDVDFEGEMVNIENKNTIPKILLEWLSSDNENANITLYQGAILFKCSVTDEPSRFRFALIIRHLLTKKPICALRFYSVIRNEIRKISAFEQNSDCVPLAFDILNLLVTHSESNSLEKLHEESIERLTKRGLSIVTSSGIFAKNSDMMIPLDVKPEDIYERKRIMTMILSRMSCSA.

A disordered region spans residues 392 to 554 (NQNAHQGSSS…RASYDAHKTG (163 aa)). Over residues 399 to 416 (SSSPSSSSPSSPPSSSSS) the composition is skewed to low complexity. Over residues 417–442 (DNNNQNIIAKSLSRQLSHHQSYIQQQ) the composition is skewed to polar residues. Positions 449–477 (SSWTTNSQSSTSLSSSTSNSTTTDFSTHT) are enriched in low complexity. Over residues 488-497 (DTPTMSNITI) the composition is skewed to polar residues. The segment covering 498 to 528 (SASSLLSQTPTPTTQLQQRLNSAAAAAAAAA) has biased composition (low complexity). A compositionally biased stretch (polar residues) spans 529 to 546 (SPSNSTPTGYTAEQQSRA). Residue Thr635 is modified to Phosphothreonine. 3 disordered regions span residues 867–898 (FKGSSPSLCSTTRSRSGSTSQSSMTPVSPLGL), 912–935 (GSSTSRNSDNVNSLNSSPKNLSSD), and 952–980 (GPSSIIRNKIPTTLTSPPGTEKSSPVQRP). 2 stretches are compositionally biased toward low complexity: residues 873–894 (SLCSTTRSRSGSTSQSSMTPVS) and 921–934 (NVNSLNSSPKNLSS). Polar residues predominate over residues 961–980 (IPTTLTSPPGTEKSSPVQRP). Positions 1717–1922 (NATHIVVAQL…DRIFRFLAEL (206 aa)) constitute a Ras-GAP domain.

The protein resides in the cytoplasm. In terms of biological role, inhibitory regulator of the Ras-cyclic AMP pathway. Stimulates the GTPase activity of Ras proteins. The sequence is that of Inhibitory regulator protein IRA2 (IRA2) from Saccharomyces cerevisiae (strain ATCC 204508 / S288c) (Baker's yeast).